The primary structure comprises 233 residues: Purine nucleoside phosphorylase DeoD-type (233 aa).

His4 lines the a purine D-ribonucleoside pocket. Phosphate is bound by residues Gly20, Arg24, Arg43, and 87–90 (RIGT). Residues 179–181 (EME) and 203–204 (SD) contribute to the a purine D-ribonucleoside site. Asp204 (proton donor) is an active-site residue.

The protein belongs to the PNP/UDP phosphorylase family. As to quaternary structure, homohexamer; trimer of homodimers.

It catalyses the reaction a purine D-ribonucleoside + phosphate = a purine nucleobase + alpha-D-ribose 1-phosphate. The enzyme catalyses a purine 2'-deoxy-D-ribonucleoside + phosphate = a purine nucleobase + 2-deoxy-alpha-D-ribose 1-phosphate. Its function is as follows. Catalyzes the reversible phosphorolytic breakdown of the N-glycosidic bond in the beta-(deoxy)ribonucleoside molecules, with the formation of the corresponding free purine bases and pentose-1-phosphate. The protein is Purine nucleoside phosphorylase DeoD-type of Helicobacter acinonychis (strain Sheeba).